A 245-amino-acid polypeptide reads, in one-letter code: Carboxy-S-adenosyl-L-methionine synthase (245 aa).

S-adenosyl-L-methionine-binding positions include Y42, 67–69 (GCS), 92–93 (DN), 120–121 (DI), N135, and R202.

This sequence belongs to the class I-like SAM-binding methyltransferase superfamily. Cx-SAM synthase family. In terms of assembly, homodimer.

The enzyme catalyses prephenate + S-adenosyl-L-methionine = carboxy-S-adenosyl-L-methionine + 3-phenylpyruvate + H2O. In terms of biological role, catalyzes the conversion of S-adenosyl-L-methionine (SAM) to carboxy-S-adenosyl-L-methionine (Cx-SAM). In Vibrio campbellii (strain ATCC BAA-1116), this protein is Carboxy-S-adenosyl-L-methionine synthase.